Here is a 564-residue protein sequence, read N- to C-terminus: MAYPGEDYDNDAAYDPYAYSNDYDMHTGDPKQDLAYERQYEQQTYQVIPEVIKNFIQYFHKTVSDLIDQKVYELQASRVSSDVIDQKVYEIQDIYENSWTKLTERFFKNTPWPEAEAIAPQVGNDAVFLILYKELYYRHIYAKVSGGPTLEQRFESYYNYCNLFNYILNADGPAPLELPNQWLWDIIDEFIYQFQSFSQYRCKTAKKSEEEIDFLRSNPKIWNVHSVLNVLHSLVDKSNINRQLEVYTSGGDPESVAGEYGRHSLYKMLGYFSLVGLLRLHSLLGDYYQAIKVLENIELNKKSMYSRVPECQVTTYYYVGFAYLMMRRYQDAIRVFANILLYIQRTKSMFQRTTYKYEMINKQNEQMHALLAIALTMYPMRIDESIHLQLREKYGDKMLRMQKGDAQVYEELFSYACPKFLSPVVPNYDNVHPNYHKEPFLQQLKVFADEVQQQAQLSTIRSFLKLYTTMPVAKLAGFLDLTEQEFRIQLLVFKHKMKNLVWTSGISALDGEFQSASEVDFYIDKDMIHIADTKVARRYGDFFIRQIHKFEELNRTLKKMGQRP.

Residues 331–537 form the PCI domain; sequence DAIRVFANIL…IHIADTKVAR (207 aa).

Belongs to the eIF-3 subunit L family. Component of the eukaryotic translation initiation factor 3 (eIF-3) complex, which is composed of 13 subunits: EIF3A, EIF3B, EIF3C, EIF3D, EIF3E, EIF3F, EIF3G, EIF3H, EIF3I, EIF3J, EIF3K, EIF3L and EIF3M.

It is found in the cytoplasm. Component of the eukaryotic translation initiation factor 3 (eIF-3) complex, which is involved in protein synthesis of a specialized repertoire of mRNAs and, together with other initiation factors, stimulates binding of mRNA and methionyl-tRNAi to the 40S ribosome. The eIF-3 complex specifically targets and initiates translation of a subset of mRNAs involved in cell proliferation. The sequence is that of Eukaryotic translation initiation factor 3 subunit L from Gallus gallus (Chicken).